Consider the following 321-residue polypeptide: Citrate synthase (321 aa).

Catalysis depends on residues histidine 248 and aspartate 306.

The protein belongs to the citrate synthase family.

It carries out the reaction oxaloacetate + acetyl-CoA + H2O = citrate + CoA + H(+). It participates in carbohydrate metabolism; tricarboxylic acid cycle; isocitrate from oxaloacetate: step 1/2. The protein is Citrate synthase (gltA) of Bartonella elizabethae (Rochalimaea elizabethae).